Reading from the N-terminus, the 235-residue chain is Urease accessory protein UreF (235 aa).

This sequence belongs to the UreF family. In terms of assembly, ureD, UreF and UreG form a complex that acts as a GTP-hydrolysis-dependent molecular chaperone, activating the urease apoprotein by helping to assemble the nickel containing metallocenter of UreC. The UreE protein probably delivers the nickel.

Its subcellular location is the cytoplasm. Its function is as follows. Required for maturation of urease via the functional incorporation of the urease nickel metallocenter. This Haemophilus influenzae (strain ATCC 51907 / DSM 11121 / KW20 / Rd) protein is Urease accessory protein UreF.